The following is a 445-amino-acid chain: Phosphoglucosamine mutase (445 aa).

Residue serine 102 is the Phosphoserine intermediate of the active site. 4 residues coordinate Mg(2+): serine 102, aspartate 241, aspartate 243, and aspartate 245. The residue at position 102 (serine 102) is a Phosphoserine.

Belongs to the phosphohexose mutase family. Requires Mg(2+) as cofactor. Post-translationally, activated by phosphorylation.

It carries out the reaction alpha-D-glucosamine 1-phosphate = D-glucosamine 6-phosphate. In terms of biological role, catalyzes the conversion of glucosamine-6-phosphate to glucosamine-1-phosphate. The polypeptide is Phosphoglucosamine mutase (Salmonella dublin (strain CT_02021853)).